The sequence spans 124 residues: MATAYQPMKPGKAGLEEPLEQIHKIRITLSSKNVKNLEKVCTDLVRGAKDKRLRVKGPVRMPTKVLKITTRKAPCGEGTNTWDRFELRVHKRVIDLFSSPDVVKQITSITIEPGVEVEVTIADS.

This sequence belongs to the universal ribosomal protein uS10 family.

The sequence is that of Small ribosomal subunit protein uS10z/uS10x (RPS20A) from Arabidopsis thaliana (Mouse-ear cress).